We begin with the raw amino-acid sequence, 158 residues long: Transcriptional repressor NrdR (158 aa).

The segment at 1–22 (MRCPYCGSEDTQVKDSRPAEDN) is disordered. A zinc finger spans residues 3–34 (CPYCGSEDTQVKDSRPAEDNTSIRRRRICPDC). Positions 11 to 22 (TQVKDSRPAEDN) are enriched in basic and acidic residues. The ATP-cone domain maps to 49–139 (LMVIKKTGRK…VYRDFSLAED (91 aa)).

It belongs to the NrdR family. Zn(2+) is required as a cofactor.

In terms of biological role, negatively regulates transcription of bacterial ribonucleotide reductase nrd genes and operons by binding to NrdR-boxes. The sequence is that of Transcriptional repressor NrdR from Rhizobium etli (strain CIAT 652).